Consider the following 631-residue polypeptide: MDILKKIEKYREEEQRLKWEGTFADYLEIIKENPMVAQSAHSRVFNMIKDSGIEEIDGRKKYSFFDRELFGLEESLERLVEEYFHPAAKRLDVRKRILLLMGPVSGGKSTLVTMLKKGLEAYTLTDNGAVYAIKGCPMHEDPLHLIPHHLRDDFYREYGIRIEGSLSPLNVMRLEEEYGGRIEDVKVERIFFSEDKRTGIGTFSPSDPKSQDIADLTGSIDFSTIAEYGSESDPRAYRFDGELNKANRGMMEFQEMLKCDEKFLWHLLSLTQEGNFKAGRFALISADELIVAHTNETEYRSFISNKKNEALHSRIIVMPVPYNLKVSEEERIYEKMIAESDVADVHIAPHTLKVAAMFSILTRLKEPKRSDIDLVKKMRLYDGESVEGYNSVDVEDMKKEYNDEGMSGIDPRYVINRISSTIIRKNMESINSLDVLRSLKEGLDQHPSISSEDRERYLNFISAARKEYDDIAKKEVQKAFVYSYEESAKTLMDNYLDNVEAYCNKNKLRDPLTGEEMNPDEKLMRSIEEQIGISENAKKAFREEILIRISAYARKGKRFDYNSHERLREAIQKKLFADLKDVVKITTSTKTPDEQQLKKVNEVVARLIDEHGYNSTSANELLKYVGSLLNR.

T217 is modified (phosphothreonine). S219 is modified (phosphoserine).

This sequence belongs to the PrkA family. Post-translationally, phosphorylated by PrkC on two sites, Thr-217 and Ser-219, with the threonine being the major site of modification.

Its subcellular location is the forespore. It is found in the spore coat. The catalysed reaction is Hydrolysis of proteins in presence of ATP.. Hydrolase activity is regulated by phosphorylation by the Ser/Thr kinase PrkC, probably allowing fine control of sporulation. Phosphorylation by PrkC does not prevent ATP fixation but it inhibits specifically PrkA protease activity and down-regulates the sporulation processes. Hydrolase activity is inhibited by a protease inhibitor, phenylmethylsulfonyl fluoride (PMSF). Potential kinase activity requires the presence of MgCl(2) and is inhibited in the presence of MnCl(2). Its function is as follows. ATP-dependent protease that regulates sporulation. Is able to bind and hydrolyze ATP. This ATP-dependent protease activity is necessary for efficient sporulation of B.subtilis. In vitro, can hydrolyze alpha-casein, an exogenous substrate of Lon proteases, in an ATP-dependent manner. PrkA also modulates sporulation by negatively regulating the transcriptional regulator Hpr/ScoC to induce the expression of sigK. The control of sporulation mediated via the Hpr/ScoC regulator is probably indirect. PrkA was originally thought to be a protein kinase, as it has been shown to phosphorylate in vitro an unidentified 60 kDa protein from B.subtilis crude extracts at a serine residue. However, Zhang et al. did not observe autophosphorylation or kinase activity for this protein, suggesting that it may have lost its kinase activity during evolution or may be a pseudokinase. The protein is ATP-dependent protease PrkA of Bacillus subtilis (strain 168).